Here is a 168-residue protein sequence, read N- to C-terminus: Lipoprotein signal peptidase (168 aa).

4 consecutive transmembrane segments (helical) span residues 15–35 (WLWL…VVMD), 47–67 (VLPF…SFLS), 75–95 (WLFT…MSKL), and 107–127 (ALII…GFVV). Residues D128 and D146 contribute to the active site. Residues 141-161 (AFNLADTTICIGAAMIILDGF) form a helical membrane-spanning segment.

The protein belongs to the peptidase A8 family.

The protein resides in the cell inner membrane. The catalysed reaction is Release of signal peptides from bacterial membrane prolipoproteins. Hydrolyzes -Xaa-Yaa-Zaa-|-(S,diacylglyceryl)Cys-, in which Xaa is hydrophobic (preferably Leu), and Yaa (Ala or Ser) and Zaa (Gly or Ala) have small, neutral side chains.. Its pathway is protein modification; lipoprotein biosynthesis (signal peptide cleavage). In terms of biological role, this protein specifically catalyzes the removal of signal peptides from prolipoproteins. The sequence is that of Lipoprotein signal peptidase from Vibrio campbellii (strain ATCC BAA-1116).